The following is a 238-amino-acid chain: Pyridoxine 5'-phosphate synthase (238 aa).

Asn-7 lines the 3-amino-2-oxopropyl phosphate pocket. 9–10 is a binding site for 1-deoxy-D-xylulose 5-phosphate; the sequence is DH. Residue Arg-18 coordinates 3-amino-2-oxopropyl phosphate. Catalysis depends on His-43, which acts as the Proton acceptor. Positions 45 and 50 each coordinate 1-deoxy-D-xylulose 5-phosphate. The active-site Proton acceptor is the Glu-70. Thr-100 lines the 1-deoxy-D-xylulose 5-phosphate pocket. The active-site Proton donor is His-191. 3-amino-2-oxopropyl phosphate-binding positions include Gly-192 and 213-214; that span reads GH.

This sequence belongs to the PNP synthase family. In terms of assembly, homooctamer; tetramer of dimers.

It is found in the cytoplasm. The catalysed reaction is 3-amino-2-oxopropyl phosphate + 1-deoxy-D-xylulose 5-phosphate = pyridoxine 5'-phosphate + phosphate + 2 H2O + H(+). It participates in cofactor biosynthesis; pyridoxine 5'-phosphate biosynthesis; pyridoxine 5'-phosphate from D-erythrose 4-phosphate: step 5/5. Catalyzes the complicated ring closure reaction between the two acyclic compounds 1-deoxy-D-xylulose-5-phosphate (DXP) and 3-amino-2-oxopropyl phosphate (1-amino-acetone-3-phosphate or AAP) to form pyridoxine 5'-phosphate (PNP) and inorganic phosphate. In Syntrophobacter fumaroxidans (strain DSM 10017 / MPOB), this protein is Pyridoxine 5'-phosphate synthase.